The sequence spans 115 residues: Somatostatin-1 (115 aa).

The N-terminal stretch at 1–24 (MLSCRFQCALVLLSLAVVFSKVSA) is a signal peptide. Positions 25–88 (APSDLRLRQL…QDEVRLELDR (64 aa)) are excised as a propeptide. The tract at residues 65 to 95 (NDALDSSDLSRGADQDEVRLELDRSANSSPL) is disordered. Residues 75–88 (RGADQDEVRLELDR) show a composition bias toward basic and acidic residues. Cys104 and Cys115 are joined by a disulfide.

The protein belongs to the somatostatin family.

The protein localises to the secreted. Its function is as follows. Somatostatin inhibits the release of somatotropin. This chain is Somatostatin-1 (sst1), found in Protopterus annectens (African lungfish).